Reading from the N-terminus, the 107-residue chain is uncharacterized protein (107 aa).

It is found in the mitochondrion. This is an uncharacterized protein from Arabidopsis thaliana (Mouse-ear cress).